A 764-amino-acid chain; its full sequence is 1,4-alpha-glucan branching enzyme GlgB (764 aa).

Asp-434 serves as the catalytic Nucleophile. The active-site Proton donor is the Glu-487.

It belongs to the glycosyl hydrolase 13 family. GlgB subfamily. As to quaternary structure, monomer.

The catalysed reaction is Transfers a segment of a (1-&gt;4)-alpha-D-glucan chain to a primary hydroxy group in a similar glucan chain.. It functions in the pathway glycan biosynthesis; glycogen biosynthesis. Catalyzes the formation of the alpha-1,6-glucosidic linkages in glycogen by scission of a 1,4-alpha-linked oligosaccharide from growing alpha-1,4-glucan chains and the subsequent attachment of the oligosaccharide to the alpha-1,6 position. The chain is 1,4-alpha-glucan branching enzyme GlgB from Nostoc sp. (strain PCC 7120 / SAG 25.82 / UTEX 2576).